The following is a 335-amino-acid chain: GTPase Obg (335 aa).

An Obg domain is found at 1-159; it reads MKFVDSAKIS…IELEMELKLM (159 aa). The region spanning 160 to 323 is the OBG-type G domain; it reads ADVGLVGFPN…LKDELWRQIS (164 aa). Residues 166–173, 191–195, 213–216, 280–283, and 304–306 each bind GTP; these read GFPNAGKS, FTTLV, DIPG, TKMD, and SSV. Mg(2+)-binding residues include Ser-173 and Thr-193.

Belongs to the TRAFAC class OBG-HflX-like GTPase superfamily. OBG GTPase family. As to quaternary structure, monomer. The cofactor is Mg(2+).

The protein localises to the cytoplasm. An essential GTPase which binds GTP, GDP and possibly (p)ppGpp with moderate affinity, with high nucleotide exchange rates and a fairly low GTP hydrolysis rate. Plays a role in control of the cell cycle, stress response, ribosome biogenesis and in those bacteria that undergo differentiation, in morphogenesis control. The chain is GTPase Obg from Chlorobaculum parvum (strain DSM 263 / NCIMB 8327) (Chlorobium vibrioforme subsp. thiosulfatophilum).